A 170-amino-acid polypeptide reads, in one-letter code: Peptide deformylase (170 aa).

Fe cation is bound by residues Cys94 and His136. The active site involves Glu137. His140 is a Fe cation binding site.

The protein belongs to the polypeptide deformylase family. It depends on Fe(2+) as a cofactor.

It carries out the reaction N-terminal N-formyl-L-methionyl-[peptide] + H2O = N-terminal L-methionyl-[peptide] + formate. Removes the formyl group from the N-terminal Met of newly synthesized proteins. Requires at least a dipeptide for an efficient rate of reaction. N-terminal L-methionine is a prerequisite for activity but the enzyme has broad specificity at other positions. The chain is Peptide deformylase from Xylella fastidiosa (strain 9a5c).